A 37-amino-acid chain; its full sequence is Large ribosomal subunit protein bL36 (37 aa).

This sequence belongs to the bacterial ribosomal protein bL36 family.

This is Large ribosomal subunit protein bL36 from Alkaliphilus oremlandii (strain OhILAs) (Clostridium oremlandii (strain OhILAs)).